A 98-amino-acid polypeptide reads, in one-letter code: NADH-ubiquinone oxidoreductase chain 4L (98 aa).

The next 3 membrane-spanning stretches (helical) occupy residues M1–M21, A29–L49, and I61–I81.

This sequence belongs to the complex I subunit 4L family. In terms of assembly, core subunit of respiratory chain NADH dehydrogenase (Complex I) which is composed of 45 different subunits.

It is found in the mitochondrion inner membrane. It catalyses the reaction a ubiquinone + NADH + 5 H(+)(in) = a ubiquinol + NAD(+) + 4 H(+)(out). In terms of biological role, core subunit of the mitochondrial membrane respiratory chain NADH dehydrogenase (Complex I) which catalyzes electron transfer from NADH through the respiratory chain, using ubiquinone as an electron acceptor. Part of the enzyme membrane arm which is embedded in the lipid bilayer and involved in proton translocation. This Monodon monoceros (Narwhal) protein is NADH-ubiquinone oxidoreductase chain 4L (MT-ND4L).